Here is an 878-residue protein sequence, read N- to C-terminus: Phosphoenolpyruvate carboxylase (878 aa).

Active-site residues include His138 and Lys544.

Belongs to the PEPCase type 1 family. Mg(2+) is required as a cofactor.

It catalyses the reaction oxaloacetate + phosphate = phosphoenolpyruvate + hydrogencarbonate. Functionally, forms oxaloacetate, a four-carbon dicarboxylic acid source for the tricarboxylic acid cycle. This chain is Phosphoenolpyruvate carboxylase, found in Psychromonas ingrahamii (strain DSM 17664 / CCUG 51855 / 37).